The sequence spans 271 residues: Ribosomal RNA small subunit methyltransferase A (271 aa).

S-adenosyl-L-methionine-binding residues include His-11, Leu-13, Gly-38, Glu-58, Asp-86, and Asn-101.

It belongs to the class I-like SAM-binding methyltransferase superfamily. rRNA adenine N(6)-methyltransferase family. RsmA subfamily.

It localises to the cytoplasm. It carries out the reaction adenosine(1518)/adenosine(1519) in 16S rRNA + 4 S-adenosyl-L-methionine = N(6)-dimethyladenosine(1518)/N(6)-dimethyladenosine(1519) in 16S rRNA + 4 S-adenosyl-L-homocysteine + 4 H(+). Functionally, specifically dimethylates two adjacent adenosines (A1518 and A1519) in the loop of a conserved hairpin near the 3'-end of 16S rRNA in the 30S particle. May play a critical role in biogenesis of 30S subunits. This Helicobacter pylori (strain Shi470) protein is Ribosomal RNA small subunit methyltransferase A.